The sequence spans 85 residues: uncharacterized protein (85 aa).

2 consecutive transmembrane segments (helical) span residues 12–34 (ICLS…VLAF) and 49–71 (IPEF…NGFV).

The protein localises to the cell membrane. This is an uncharacterized protein from Archaeoglobus fulgidus (strain ATCC 49558 / DSM 4304 / JCM 9628 / NBRC 100126 / VC-16).